The chain runs to 439 residues: MGFAVVRTNREFVRPSAATPPSSGELLELSIIDRVVGLRHLVRSLHIFSAAAPSGGDAKPSPARVIKEALGKALVDYYPFAGRFVDGGGGPGSARVECTGEGAWFVEAAAGCSLDDVNGLDHPLMIPEDDLLPDAAPGVHPLDLPLMMQVTEFSCGGFVVGLISVHTMADGLGAGQFINAVGDYARGLDRPRVSPVWAREAIPSPPKLPPGPPPELKMFQLRHVTADLSLDSINKAKSAYFAATGHRCSTFDVAIAKTWQARTRALRLPEPTSRVNLCFFANTRHLMAGAAAWPAPAAGGNGGNGFYGNCFYPVSVVAESGAVEAADVAGVVGMIREAKARLPADFARWAVADFREDPYELSFTYDSLFVSDWTRLGFLEADYGWGPPSHVIPFAYYPFMAVAIIGAPPVPKTGARIMTQCVEDDHLPAFKEEIKAFDK.

Active-site proton acceptor residues include histidine 166 and aspartate 382.

This sequence belongs to the plant acyltransferase family.

Grass-specific monolignol p-coumaroyl transferase involved in the biosynthesis of acylated monolignols or monolignol conjugates that serve as monomer precursors of lignin. Can synthesize sinapyl p-coumarate, p-coumaryl p-coumarate, sinapyl caffeate and p-coumaryl caffeate in vitro. In Oryza sativa subsp. japonica (Rice), this protein is Acyl transferase 4.